A 281-amino-acid chain; its full sequence is Pantothenate synthetase (281 aa).

ATP is bound at residue 30–37 (MGYLHEGH). Residue His37 is the Proton donor of the active site. Gln61 is a (R)-pantoate binding site. Residue Gln61 participates in beta-alanine binding. 147 to 150 (GQKD) provides a ligand contact to ATP. Gln153 contributes to the (R)-pantoate binding site. Residues Val176 and 184-187 (MSSR) contribute to the ATP site.

It belongs to the pantothenate synthetase family. In terms of assembly, homodimer.

It localises to the cytoplasm. The catalysed reaction is (R)-pantoate + beta-alanine + ATP = (R)-pantothenate + AMP + diphosphate + H(+). It participates in cofactor biosynthesis; (R)-pantothenate biosynthesis; (R)-pantothenate from (R)-pantoate and beta-alanine: step 1/1. Its function is as follows. Catalyzes the condensation of pantoate with beta-alanine in an ATP-dependent reaction via a pantoyl-adenylate intermediate. The sequence is that of Pantothenate synthetase from Acetivibrio thermocellus (strain ATCC 27405 / DSM 1237 / JCM 9322 / NBRC 103400 / NCIMB 10682 / NRRL B-4536 / VPI 7372) (Clostridium thermocellum).